The chain runs to 601 residues: DDB1- and CUL4-associated factor 8 (601 aa).

2 stretches are compositionally biased toward polar residues: residues 1-24 (MSFSGEMSNGKTDVTNGGFSSSPE) and 46-60 (VSLSLTADETGTTQA). The disordered stretch occupies residues 1–150 (MSFSGEMSNG…DWLISEKTPL (150 aa)). Positions 39 to 50 (IEVEASDVSLSL) match the Nuclear export signal motif. Over residues 61–99 (ESRDSCSETSGEDKDSDSMDDTGHYSINDENRGNDQSHS) the composition is skewed to basic and acidic residues. A coiled-coil region spans residues 94 to 131 (NDQSHSEDEEEEEEEDEEEEAVRHRKRAQRKRANRDQE). Residues 100–113 (EDEEEEEEEDEEEE) are compositionally biased toward acidic residues. The segment covering 116–126 (RHRKRAQRKRA) has biased composition (basic residues). The span at 127-140 (NRDQESSDEERALD) shows a compositional bias: basic and acidic residues. WD repeat units follow at residues 194–233 (GHSGCVNTLHFNQRGTCLASGSDDLKVVVWDWVRRKPVLE), 237–278 (GHKS…CCKN), 284–324 (QHKG…PASR), 332–372 (ESKV…ENVN), 388–427 (EAKANITCLVYSHDGSELLASYNDEDIYLFNSSHSDGAEY), 435–475 (RNNA…IVQF), and 479–519 (DKGG…TELD). Residues 561–601 (RRRRRDAGLGAGDAESDDSPSSSDSSDDDEDGPDRVQCIPS) form a disordered region.

The protein belongs to the WD repeat DCAF8 family.

Its subcellular location is the nucleus. It is found in the cytoplasm. This chain is DDB1- and CUL4-associated factor 8 (dcaf8), found in Xenopus laevis (African clawed frog).